The primary structure comprises 149 residues: Nucleoside diphosphate kinase (149 aa).

ATP contacts are provided by lysine 9, phenylalanine 57, arginine 85, threonine 91, arginine 102, and asparagine 112. Catalysis depends on histidine 115, which acts as the Pros-phosphohistidine intermediate.

It belongs to the NDK family. In terms of assembly, homotetramer. Requires Mg(2+) as cofactor.

Its subcellular location is the cytoplasm. It catalyses the reaction a 2'-deoxyribonucleoside 5'-diphosphate + ATP = a 2'-deoxyribonucleoside 5'-triphosphate + ADP. It carries out the reaction a ribonucleoside 5'-diphosphate + ATP = a ribonucleoside 5'-triphosphate + ADP. In terms of biological role, major role in the synthesis of nucleoside triphosphates other than ATP. The ATP gamma phosphate is transferred to the NDP beta phosphate via a ping-pong mechanism, using a phosphorylated active-site intermediate. This chain is Nucleoside diphosphate kinase, found in Microcystis aeruginosa (strain NIES-843 / IAM M-2473).